A 379-amino-acid polypeptide reads, in one-letter code: Putative thylakoid lumen peptidyl-prolyl cis-trans isomerase sll0408 (379 aa).

Residues 1–33 (MQIIKTPLGIITRRGLQLSLLSLLLTMLSLTWA) form the signal peptide. Positions 190-378 (GRATVEMTTN…SGADNLVNGN (189 aa)) constitute a PPIase cyclophilin-type domain.

It localises to the cellular thylakoid lumen. It catalyses the reaction [protein]-peptidylproline (omega=180) = [protein]-peptidylproline (omega=0). In terms of biological role, PPIases accelerate the folding of proteins. It catalyzes the cis-trans isomerization of proline imidic peptide bonds in oligopeptides. Required for the assembly and stabilization of PSII. This Synechocystis sp. (strain ATCC 27184 / PCC 6803 / Kazusa) protein is Putative thylakoid lumen peptidyl-prolyl cis-trans isomerase sll0408.